Consider the following 430-residue polypeptide: Gustatory receptor-like 43a (430 aa).

Over 1–31 (MSTGSHSPEAMWSATNFRRHQRKPNQVLHRW) the chain is Cytoplasmic. Residues 32-52 (FFKGSAWIIYAIACGLHFFKL) form a helical membrane-spanning segment. At 53–79 (HYNERTNQVEESQYHRIWSKIVVVLKV) the chain is on the extracellular side. The helical transmembrane segment at 80–100 (ILLASPYLQYFVLGLGIYIHI) threads the bilayer. At 101–110 (TLVQDSKAQN) the chain is on the cytoplasmic side. A helical transmembrane segment spans residues 111 to 131 (FLMSLIVLGIVIGVLRRLLIF). Residues 132-168 (LHLKRDRRFLKHTVNEILHITSALEQKFGMEYKCDST) lie on the Extracellular side of the membrane. Residues 169 to 189 (LLVVYLAKLWILTVMLDSLWY) traverse the membrane as a helical segment. Residues 190-277 (KPYFLSSIFL…RDNVSWLSTS (88 aa)) lie on the Cytoplasmic side of the membrane. The chain crosses the membrane as a helical span at residues 278-298 (VYLMIFTCIFNAELLIECSLF). Residues 299–306 (AGDELENK) are Extracellular-facing. Residues 307–327 (IYIITDGCLGPVCVPILYVLI) form a helical membrane-spanning segment. Topologically, residues 328–396 (LGMCTDRFRD…IILDITCDRE (69 aa)) are cytoplasmic. A helical membrane pass occupies residues 397–417 (FVMDYIVTVILTALSLVQYTI). The Extracellular segment spans residues 418–430 (STGGNISECVTHK). A glycan (N-linked (GlcNAc...) asparagine) is linked at asparagine 422.

It is found in the cell membrane. The chain is Gustatory receptor-like 43a from Drosophila melanogaster (Fruit fly).